Here is a 102-residue protein sequence, read N- to C-terminus: Apolipoprotein A-II (102 aa).

An N-terminal signal peptide occupies residues 1-18 (MKLLAMVALLVTICSLEG). At M49 the chain carries Methionine sulfoxide.

It belongs to the apolipoprotein A2 family. Monomer. Interacts with NAXE and NDRG1. In terms of tissue distribution, plasma.

The protein localises to the secreted. Its function is as follows. May stabilize HDL (high density lipoprotein) structure by its association with lipids, and affect the HDL metabolism. The protein is Apolipoprotein A-II (Apoa2) of Rattus norvegicus (Rat).